We begin with the raw amino-acid sequence, 167 residues long: NADH-quinone oxidoreductase subunit I 1 (167 aa).

4Fe-4S ferredoxin-type domains are found at residues 58–88 (LRRY…IDAE) and 98–127 (TRYD…EGPN). Cysteine 68, cysteine 71, cysteine 74, cysteine 78, cysteine 107, cysteine 110, cysteine 113, and cysteine 117 together coordinate [4Fe-4S] cluster.

The protein belongs to the complex I 23 kDa subunit family. NDH-1 is composed of 14 different subunits. Subunits NuoA, H, J, K, L, M, N constitute the membrane sector of the complex. It depends on [4Fe-4S] cluster as a cofactor.

It localises to the cell inner membrane. It catalyses the reaction a quinone + NADH + 5 H(+)(in) = a quinol + NAD(+) + 4 H(+)(out). In terms of biological role, NDH-1 shuttles electrons from NADH, via FMN and iron-sulfur (Fe-S) centers, to quinones in the respiratory chain. The immediate electron acceptor for the enzyme in this species is believed to be ubiquinone. Couples the redox reaction to proton translocation (for every two electrons transferred, four hydrogen ions are translocated across the cytoplasmic membrane), and thus conserves the redox energy in a proton gradient. This is NADH-quinone oxidoreductase subunit I 1 from Cereibacter sphaeroides (strain ATCC 17029 / ATH 2.4.9) (Rhodobacter sphaeroides).